Here is a 437-residue protein sequence, read N- to C-terminus: MTHYATVICGGGPAGVSAVVAAAVQGRLEEFLDRGVLLVEATGRAGSGSIPHYGIRANSLGSAFLECLDGPAGSGLLAGLADSAEARELRGWADEYPPLPVVGAFLTLVGERVVDALRRHPRCDALLGHRVVEVRTGPERATVLLSGPDGELSHTGDRVLLTMGGRERTELAPDALAALVERRPGLRVLSSGEVITDPSWHPDAASPHRALGSIAVLGGAHSAWAVAAHLARLARAGWFAGPVEVTVVERRLPPIFYFSAAEARAEGYRWDEADVCGPSGRVHRFGGLRGPARELARQVMGLAAEKAPDGFGQVVLDGPWTAEALEAAVGDADLVITALGYDARLPRLLGADGRELELARPRGAVDTGRDGLPGLAAGGRAERLVMYGLGAGLVPSEETGGEPGYRGRLDGVWVYQHDIGAVILRALLANDRTEDGR.

FAD is required as a cofactor.

The catalysed reaction is CMP-5'-(3-aminopropyl)phosphonate + NADPH + O2 = CMP-5'-(N-hydroxy-3-aminopropyl)phosphonate + NADP(+) + H2O. Its pathway is antibiotic biosynthesis. Functionally, hydroxylase involved in the biosynthesis of the phosphonate antibiotic FR-900098, a potent antimalarial agent that acts as an inhibitor of 1-deoxy-D-xylulose 5-phosphate reductoisomerase (DXR), the first enzyme in the nonmevalonate pathway for isoprenoid biosynthesis. Catalyzes the N-hydroxylation of CMP-5'-3-aminopropylphosphonate (CMP-5'-3APn) to CMP-5'-(N-hydroxy-3-aminopropyl)phosphonate (CMP-5'-H3APn). Cannot use CMP-5'-N-acetyl-3-aminopropylphosphonate (CMP-5'-Ac3APn) as a substrate. This is CMP-5'-(3-aminopropyl)phosphonate hydroxylase from Streptomyces rubellomurinus (strain ATCC 31215).